The following is a 318-amino-acid chain: MSLTLSELQIRTLKQTLESSKIPFKSEVRLDILSSFKIGGICPVVVEPENSNQVLETLFIFHKSEIPWKILGGGSNLLISDHPDNFVTLRLSGKFKEFEYLEGGKFRIGSATNTTPTFRQISQLGYTGAEFLSTIPGWTGGAVIQNAGCYGGELFDLIQTVEFLRNNEIFVRSPSEIKHGYRFTEFLNEKDSIILGIEILLKEGNLEEIQTSLKDKRDRRNSSQPENKKSAGSVFKNPKIFLENGKEIKAWELIDQAGLRGQIKGGAQISPEHCNFIVNVGAATAADVNYLVELILDKVFQTTGIRLNREIEYFGDIP.

The 167-residue stretch at 38 to 204 folds into the FAD-binding PCMH-type domain; that stretch reads IGGICPVVVE…LGIEILLKEG (167 aa). Residue R182 is part of the active site. Positions 212–232 are disordered; it reads SLKDKRDRRNSSQPENKKSAG. The segment covering 213-229 has biased composition (basic and acidic residues); that stretch reads LKDKRDRRNSSQPENKK. The active-site Proton donor is S233. E310 is an active-site residue.

This sequence belongs to the MurB family. FAD serves as cofactor.

The protein resides in the cytoplasm. The catalysed reaction is UDP-N-acetyl-alpha-D-muramate + NADP(+) = UDP-N-acetyl-3-O-(1-carboxyvinyl)-alpha-D-glucosamine + NADPH + H(+). It participates in cell wall biogenesis; peptidoglycan biosynthesis. Cell wall formation. The protein is UDP-N-acetylenolpyruvoylglucosamine reductase of Leptospira borgpetersenii serovar Hardjo-bovis (strain JB197).